The primary structure comprises 248 residues: Gamma-interferon-inducible lysosomal thiol reductase (248 aa).

Residues 1–26 (MSWSPILPFLSLLLLLFPLEVPRAAT) form the signal peptide. Positions 27 to 54 (ASLSQASSEGTTTCKAHDVCLLGPRPLP) are cleaved as a propeptide — removed in mature form. A disulfide bridge links C69 with C72. N-linked (GlcNAc...) asparagine glycans are attached at residues N92 and N105. A propeptide spans 231-248 (KPDICSSIADSPRKVCYK) (removed in mature form).

This sequence belongs to the GILT family. In terms of assembly, dimer; disulfide-linked. In terms of processing, N-glycosylated. Sugar chains contain mannose-6-phosphate. Synthesized as a 35 kDa precursor which is then processed into the mature 30 kDa form via cleavage of N-terminal and C-terminal propeptides. Processing of the precursor is mediated by multiple lysosomal proteases.

It localises to the secreted. It is found in the lysosome. Functionally, lysosomal thiol reductase that can reduce protein disulfide bonds. May facilitate the complete unfolding of proteins destined for lysosomal degradation. Plays an important role in antigen processing. Facilitates the generation of MHC class II-restricted epitodes from disulfide bond-containing antigen by the endocytic reduction of disulfide bonds. Also facilitates MHC class I-restricted recognition of exogenous antigens containing disulfide bonds by CD8+ T-cells or crosspresentation. In Mus musculus (Mouse), this protein is Gamma-interferon-inducible lysosomal thiol reductase (Ifi30).